Here is a 21-residue protein sequence, read N- to C-terminus: Serine protease inhibitor 1 (21 aa).

In terms of domain architecture, Pacifastin spans 1-21; that stretch reads EQQCTPGQTKKEDCNNCTSGD. Positions 1 to 21 are disordered; the sequence is EQQCTPGQTKKEDCNNCTSGD.

The protein belongs to the protease inhibitor I19 family. Expressed in hemolymph.

Its subcellular location is the secreted. Functionally, probable serine protease inhibitor. In Melanoplus sanguinipes (Migratory grasshopper), this protein is Serine protease inhibitor 1.